The following is a 1399-amino-acid chain: DNA-directed RNA polymerase subunit beta' (1399 aa).

Zn(2+)-binding residues include Cys70, Cys72, Cys85, and Cys88. Asp460, Asp462, and Asp464 together coordinate Mg(2+). Cys814, Cys888, Cys895, and Cys898 together coordinate Zn(2+).

The protein belongs to the RNA polymerase beta' chain family. As to quaternary structure, the RNAP catalytic core consists of 2 alpha, 1 beta, 1 beta' and 1 omega subunit. When a sigma factor is associated with the core the holoenzyme is formed, which can initiate transcription. Mg(2+) is required as a cofactor. Requires Zn(2+) as cofactor.

It catalyses the reaction RNA(n) + a ribonucleoside 5'-triphosphate = RNA(n+1) + diphosphate. DNA-dependent RNA polymerase catalyzes the transcription of DNA into RNA using the four ribonucleoside triphosphates as substrates. The chain is DNA-directed RNA polymerase subunit beta' from Pseudomonas putida (strain ATCC 700007 / DSM 6899 / JCM 31910 / BCRC 17059 / LMG 24140 / F1).